The sequence spans 280 residues: Tryptophan synthase alpha chain (280 aa).

Residues Glu-49 and Asp-60 each act as proton acceptor in the active site.

Belongs to the TrpA family. Tetramer of two alpha and two beta chains.

The enzyme catalyses (1S,2R)-1-C-(indol-3-yl)glycerol 3-phosphate + L-serine = D-glyceraldehyde 3-phosphate + L-tryptophan + H2O. The protein operates within amino-acid biosynthesis; L-tryptophan biosynthesis; L-tryptophan from chorismate: step 5/5. In terms of biological role, the alpha subunit is responsible for the aldol cleavage of indoleglycerol phosphate to indole and glyceraldehyde 3-phosphate. The polypeptide is Tryptophan synthase alpha chain (Corynebacterium glutamicum (strain R)).